The following is a 148-amino-acid chain: Lysozyme C (148 aa).

The first 18 residues, 1-18 (MKVLVILGLVLLSVMVQG), serve as a signal peptide directing secretion. Residues 19 to 148 (KVFERCELAR…VSQYVQGCGV (130 aa)) form the C-type lysozyme domain. 4 disulfide bridges follow: cysteine 24-cysteine 146, cysteine 48-cysteine 134, cysteine 83-cysteine 99, and cysteine 95-cysteine 113. Residues glutamate 53 and aspartate 71 contribute to the active site.

This sequence belongs to the glycosyl hydrolase 22 family. Monomer.

The protein resides in the secreted. The enzyme catalyses Hydrolysis of (1-&gt;4)-beta-linkages between N-acetylmuramic acid and N-acetyl-D-glucosamine residues in a peptidoglycan and between N-acetyl-D-glucosamine residues in chitodextrins.. Functionally, lysozymes have primarily a bacteriolytic function; those in tissues and body fluids are associated with the monocyte-macrophage system and enhance the activity of immunoagents. This is Lysozyme C (LYZ) from Saimiri sciureus (Common squirrel monkey).